A 521-amino-acid chain; its full sequence is Bifunctional dihydrofolate reductase-thymidylate synthase (521 aa).

Residues 22-232 (AFSLVVAVDE…TKYYFEKLIP (211 aa)) enclose the DHFR domain. Val-26 serves as a coordination point for substrate. Residues Ala-28 and 34 to 40 (GIGDGRS) each bind NADP(+). Residue Asp-48 coordinates substrate. NADP(+) contacts are provided by residues 78–80 (RKT) and 99–102 (LSST). Residues Ile-154, Tyr-160, and Thr-178 each contribute to the substrate site. Position 155–162 (155–162 (GGGSVYAE)) interacts with NADP(+). The thymidylate synthase stretch occupies residues 237-521 (EEQYLSLVDR…YPPISMKMAV (285 aa)). Arg-257 contacts dUMP. The active site involves Cys-403. DUMP is bound by residues His-404, 422 to 426 (QRSCD), Asn-434, and 464 to 466 (HVY).

This sequence in the N-terminal section; belongs to the dihydrofolate reductase family. The protein in the C-terminal section; belongs to the thymidylate synthase family. In terms of assembly, homodimer.

The catalysed reaction is (6S)-5,6,7,8-tetrahydrofolate + NADP(+) = 7,8-dihydrofolate + NADPH + H(+). It catalyses the reaction dUMP + (6R)-5,10-methylene-5,6,7,8-tetrahydrofolate = 7,8-dihydrofolate + dTMP. The protein operates within cofactor biosynthesis; tetrahydrofolate biosynthesis; 5,6,7,8-tetrahydrofolate from 7,8-dihydrofolate: step 1/1. In terms of biological role, bifunctional enzyme. Involved in de novo dTMP biosynthesis. Key enzyme in folate metabolism. Catalyzes an essential reaction for de novo glycine and purine synthesis, DNA precursor synthesis, and for the conversion of dUMP to dTMP. This is Bifunctional dihydrofolate reductase-thymidylate synthase from Trypanosoma cruzi.